Here is a 315-residue protein sequence, read N- to C-terminus: Capsid protein (315 aa).

The segment at 1-60 is disordered; the sequence is MPPKPAPGDNEGNASGSTPTPPPPPPARTAEEARLRLAEMEREREQEQLLEEMNSNTPAE. Residues 29–47 show a composition bias toward basic and acidic residues; it reads TAEEARLRLAEMEREREQE.

It belongs to the potexviruses coat protein family.

Its subcellular location is the virion. Its function is as follows. Required for genome encapsidation. Forms ribonucleoprotein complexes along with TGB1 helicase and viral RNA. The sequence is that of Capsid protein from Chrysanthemum morifolium (Florist's daisy).